The primary structure comprises 205 residues: NADH-quinone oxidoreductase subunit C (205 aa).

Belongs to the complex I 30 kDa subunit family. In terms of assembly, NDH-1 is composed of 14 different subunits. Subunits NuoB, C, D, E, F, and G constitute the peripheral sector of the complex.

It localises to the cell inner membrane. The catalysed reaction is a quinone + NADH + 5 H(+)(in) = a quinol + NAD(+) + 4 H(+)(out). Functionally, NDH-1 shuttles electrons from NADH, via FMN and iron-sulfur (Fe-S) centers, to quinones in the respiratory chain. The immediate electron acceptor for the enzyme in this species is believed to be ubiquinone. Couples the redox reaction to proton translocation (for every two electrons transferred, four hydrogen ions are translocated across the cytoplasmic membrane), and thus conserves the redox energy in a proton gradient. This is NADH-quinone oxidoreductase subunit C from Bartonella bacilliformis (strain ATCC 35685 / KC583 / Herrer 020/F12,63).